The sequence spans 762 residues: MVNFDEEVFRAYYEHKIKSFIKEELSNNLIKGNIFEFDIEKFLMHFPDACEVNDLIIERPKEIEEIILDIFKEAYVELFGEDKELEKIQIAFKNPKGCEKLIEEISAEDINKLVKFEGNILQAGKVNALLKKAVYYCNKRIKDENGGFLCKYTYTPCDGRVEIEIDDYFSEGEFIKDMLSPREVKKILENKKVWDKLVEKGKIPRCVDLKENDEVFKENLKEIKFILDEYDSIYVNIQEMEIQQPIDLMKNPEEPARSIRVFLENTPGIYAGRVNVIGRVMKREYRHNIPIYKIYIKSNYIKISESYNKIEVKDILRNEELIETLNELGRKKNIIDILSNYLISQIKGYELVKKAIFLQQIKGAFKFLPDGTPLRRDSHILLITDPGIGKSTMLRRIARLFPQNAYASVTTATGGGLTAIVTREATEIGDGWVVKPGVFVRANEGTACIDELTVDKNVMKYILEAMESQTIHVNKGGINVKLPARCAVLAACNPKRGRFDRNLTVIEQIDIPAPLLSRFDLIFPLMDKPNRKSDEEIAEHILNTHIETATKDYKILGAIDIDGITVDEKLLKYYIIYARSCAYIEENQDLYLGEFDETKLIMPYLTDKAKKMIKKYYLEMRKLGEGDNPIPITARQLEAIIRIAEMHAKARLSDKVEDVDAEVAISIIDDCLKQVAYDPETGTLDLDKIAGTPKSRRDKMDAVLNIIREIVSLRDDGLAPEEEIYEKAMAIGLSEKDVNDALEYLKKAGDIYNPRYGFWGLL.

The 209-residue stretch at 334–542 folds into the MCM domain; it reads IIDILSNYLI…SDEEIAEHIL (209 aa). 384 to 391 serves as a coordination point for ATP; that stretch reads TDPGIGKS.

It belongs to the MCM family.

This is an uncharacterized protein from Methanocaldococcus jannaschii (strain ATCC 43067 / DSM 2661 / JAL-1 / JCM 10045 / NBRC 100440) (Methanococcus jannaschii).